A 320-amino-acid polypeptide reads, in one-letter code: L-lactate dehydrogenase 2 (320 aa).

NAD(+)-binding residues include valine 16, aspartate 37, lysine 42, and tyrosine 69. Substrate is bound at residue arginine 94. NAD(+) is bound by residues serine 107, 124-126, and threonine 149; that span reads VTN. A substrate-binding site is contributed by 126 to 129; it reads NPVD. 154 to 157 lines the substrate pocket; sequence DTAR. Beta-D-fructose 1,6-bisphosphate is bound by residues arginine 159 and histidine 174. Histidine 181 functions as the Proton acceptor in the catalytic mechanism. Threonine 235 contacts substrate.

The protein belongs to the LDH/MDH superfamily. LDH family. As to quaternary structure, homotetramer.

It is found in the cytoplasm. It carries out the reaction (S)-lactate + NAD(+) = pyruvate + NADH + H(+). Its pathway is fermentation; pyruvate fermentation to lactate; (S)-lactate from pyruvate: step 1/1. Its activity is regulated as follows. Allosterically activated by fructose 1,6-bisphosphate (FBP). Catalyzes the conversion of lactate to pyruvate. This is L-lactate dehydrogenase 2 from Clostridium acetobutylicum (strain ATCC 824 / DSM 792 / JCM 1419 / IAM 19013 / LMG 5710 / NBRC 13948 / NRRL B-527 / VKM B-1787 / 2291 / W).